A 230-amino-acid polypeptide reads, in one-letter code: Octanoyltransferase (230 aa).

The BPL/LPL catalytic domain maps to 31–230; sequence PETPDELWIC…GDKLTRYLAP (200 aa). Substrate-binding positions include 70 to 77, 163 to 165, and 176 to 178; these read RGGQVTYH, ALG, and GVA. Cys-194 serves as the catalytic Acyl-thioester intermediate.

It belongs to the LipB family.

It localises to the cytoplasm. It catalyses the reaction octanoyl-[ACP] + L-lysyl-[protein] = N(6)-octanoyl-L-lysyl-[protein] + holo-[ACP] + H(+). It functions in the pathway protein modification; protein lipoylation via endogenous pathway; protein N(6)-(lipoyl)lysine from octanoyl-[acyl-carrier-protein]: step 1/2. Functionally, catalyzes the transfer of endogenously produced octanoic acid from octanoyl-acyl-carrier-protein onto the lipoyl domains of lipoate-dependent enzymes. Lipoyl-ACP can also act as a substrate although octanoyl-ACP is likely to be the physiological substrate. This Albidiferax ferrireducens (strain ATCC BAA-621 / DSM 15236 / T118) (Rhodoferax ferrireducens) protein is Octanoyltransferase.